The primary structure comprises 226 residues: Beta-casein (226 aa).

The interval 1–51 (REKEELNVSSETVESLSSNEPDSSSEESITHINKEKSQKFKHEGQQQREVE) is disordered. Ser9 bears the Phosphoserine mark. Thr12 is modified (phosphothreonine). 4 positions are modified to phosphoserine: Ser15, Ser17, Ser18, and Ser25. A compositionally biased stretch (basic and acidic residues) spans 28–51 (SITHINKEKSQKFKHEGQQQREVE).

Belongs to the beta-casein family. There are at least three different forms found in milk, with varying degrees of phosphorylation. These include form 5-P which is phosphorylated at three sites, this form is present in low amounts, form 6-P which is phosphorylated at six sites, and form 7-P which is phosphorylated at seven sites. Mammary gland specific. Secreted in milk.

The protein localises to the secreted. Its function is as follows. Important role in determination of the surface properties of the casein micelles. This Equus asinus (Donkey) protein is Beta-casein.